Reading from the N-terminus, the 503-residue chain is Ell-associated factor Eaf (503 aa).

Polar residues-rich tracts occupy residues 143–158 (PGQQ…TNVA) and 170–189 (ENST…SRRN). Disordered regions lie at residues 143-223 (PGQQ…PAWD) and 251-503 (NGSQ…EDDD). At serine 199 the chain carries Phosphoserine. A compositionally biased stretch (polar residues) spans 251-264 (NGSQANTSGSSTGS). Residues 281-296 (GKQRQAPHHGHAKRQQ) show a composition bias toward basic residues. Residues 297–311 (RSSPPMVQQQPNFGR) show a composition bias toward polar residues. Low complexity predominate over residues 312–326 (NSYNGGNNYAQQQQH). Over residues 382 to 397 (DSSDSDSGSDSDDSTE) the composition is skewed to acidic residues. 2 stretches are compositionally biased toward low complexity: residues 415-435 (MHHQ…QQQH) and 484-497 (NDLL…SSNS).

The protein belongs to the EAF family.

It localises to the nucleus. Functionally, promotes transcriptional elongation by Su(Tpl)/ELL. Essential for development. This chain is Ell-associated factor Eaf, found in Drosophila ananassae (Fruit fly).